Consider the following 228-residue polypeptide: Ras-related protein Rab-33B (228 aa).

Asn-41, Val-42, Gly-43, Lys-44, Thr-45, Cys-46, Thr-60, and Thr-63 together coordinate GTP. Residue Thr-45 participates in Mg(2+) binding. The short motif at 54 to 66 is the Switch 1 element; it reads GRFPQRTEATIGV. 2 residues coordinate Mg(2+): Thr-63 and Asp-86. The Switch 2 signature appears at 87–106; it reads TAGQERFRKSMVQHYYRNVH. GTP-binding residues include Gly-89, Asn-146, Lys-147, Asp-149, Ala-177, and Lys-178. Residues Cys-226 and Cys-228 are each lipidated (S-geranylgeranyl cysteine). Cys-228 bears the Cysteine methyl ester mark.

The protein belongs to the small GTPase superfamily. Rab family. In terms of assembly, interacts (GTP- and GDP-bound forms) with ATG16L1; the complex consists of a tetramer where two RAB33B molecules bind independently one molecule of the ATG16L1 homodimer; the interaction promotes ATG12-ATG5-ATG16L1 complex recruitment to phagophores. Interacts with ATG16L2; however interaction is approximately hundred times lower than for ATG16L1. Interacts with RIC1 (via C-terminus domain); the interaction is direct with a preference for RAB33B-GTP. Interacts with RGP1. Mg(2+) serves as cofactor.

Its subcellular location is the golgi apparatus membrane. The protein localises to the golgi apparatus. It localises to the cis-Golgi network. It is found in the preautophagosomal structure membrane. It carries out the reaction GTP + H2O = GDP + phosphate + H(+). Its activity is regulated as follows. Regulated by guanine nucleotide exchange factors (GEFs) which promote the exchange of bound GDP for free GTP. Regulated by GTPase activating proteins (GAPs) such as SGSM2 which increase the GTP hydrolysis activity. Inhibited by GDP dissociation inhibitors (GDIs). The small GTPases Rab are key regulators of intracellular membrane trafficking, from the formation of transport vesicles to their fusion with membranes. Rabs cycle between an inactive GDP-bound form and an active GTP-bound form that is able to recruit to membranes different sets of downstream effectors directly responsible for vesicle formation, movement, tethering and fusion. RAB33B acts, in coordination with RAB6A, to regulate intra-Golgi retrograde trafficking. Participates in autophagosome formation by recruiting the ATG12-ATG5-ATG16L1 complex to phagophores, probably in a nucleotide-independent manner. The chain is Ras-related protein Rab-33B (RAB33B) from Gallus gallus (Chicken).